A 659-amino-acid polypeptide reads, in one-letter code: UvrABC system protein B (659 aa).

The region spanning 27–414 (EGLEQNKKSQ…AHGEIVKQII (388 aa)) is the Helicase ATP-binding domain. ATP is bound at residue 40–47 (GVTGSGKT). The short motif at 93–116 (YFDYYRPEAYMPNTDTYIDKTTKS) is the Beta-hairpin element. The region spanning 432–594 (QVEDMFDEIQ…IIPKTIIKPI (163 aa)) is the Helicase C-terminal domain. The UVR domain occupies 624–659 (EALVKDLRNQMLDASKQLNFERAAELRDIILELEAN).

It belongs to the UvrB family. In terms of assembly, forms a heterotetramer with UvrA during the search for lesions. Interacts with UvrC in an incision complex.

The protein resides in the cytoplasm. The UvrABC repair system catalyzes the recognition and processing of DNA lesions. A damage recognition complex composed of 2 UvrA and 2 UvrB subunits scans DNA for abnormalities. Upon binding of the UvrA(2)B(2) complex to a putative damaged site, the DNA wraps around one UvrB monomer. DNA wrap is dependent on ATP binding by UvrB and probably causes local melting of the DNA helix, facilitating insertion of UvrB beta-hairpin between the DNA strands. Then UvrB probes one DNA strand for the presence of a lesion. If a lesion is found the UvrA subunits dissociate and the UvrB-DNA preincision complex is formed. This complex is subsequently bound by UvrC and the second UvrB is released. If no lesion is found, the DNA wraps around the other UvrB subunit that will check the other stand for damage. The protein is UvrABC system protein B of Mycoplasma mobile (strain ATCC 43663 / 163K / NCTC 11711) (Mesomycoplasma mobile).